Reading from the N-terminus, the 150-residue chain is MQIILLEKVANLGNLGDIVKVKDGYARNFLIPNRKARRATKDAIAEFEVRRAELEKIAAEKLAAAQAVGEKLSGQAFEITQKSGVDGRLFGSVTNGDVAELLKKAGYEVEKAQVRMPEGPLKMIGEHGVQVALHTDVVVDVTVNVIGDHA.

Belongs to the bacterial ribosomal protein bL9 family.

Its function is as follows. Binds to the 23S rRNA. The protein is Large ribosomal subunit protein bL9 of Burkholderia thailandensis (strain ATCC 700388 / DSM 13276 / CCUG 48851 / CIP 106301 / E264).